Consider the following 458-residue polypeptide: MPQKLYIETFGCQMNEYDSAKMRDLLEVSDSFELARSPEEADVLLLNTCSIRDKAQEKVFSQLGRWRPIKLRRPEVVIGVGGCVASQEGEALQKRAPYVDIVFGPQTLHRLPSMLEQVRCERRPVVDVSFPAIEKFDALPEPRADGPKAFVSVMEGCGKYCTFCVVPYTRGEEISRPVDDVIAEIVALAEQGVREVNLLGQNVNAYRGVLADGGMADLALLMHYVAAVDGIDRIRFTTSHPVEFSDALIEAFRDIPQLVSHLHLPVQSGSDRILRLMKRGHTRAEYMAKVAKLREIRPDLSLSSDFIVGFPGETDEDFEDTMALIEQLGFDQSFSFIFSARPGTPAAAMADDVPPETKRARLARLQAKIADNAAKIGASMVGSIQSVLVEGTSRKNFNELSGRTENNRVVNFAGHPRLIGQFVDVVITESLPNSLRGRLIGVAHESDFISPDSTAQIA.

The 118-residue stretch at 3-120 (QKLYIETFGC…LPSMLEQVRC (118 aa)) folds into the MTTase N-terminal domain. [4Fe-4S] cluster-binding residues include Cys-12, Cys-49, Cys-83, Cys-157, Cys-161, and Cys-164. The Radical SAM core domain occupies 143–375 (RADGPKAFVS…QAKIADNAAK (233 aa)). The TRAM domain maps to 378-441 (ASMVGSIQSV…PNSLRGRLIG (64 aa)).

It belongs to the methylthiotransferase family. MiaB subfamily. Monomer. The cofactor is [4Fe-4S] cluster.

It is found in the cytoplasm. The catalysed reaction is N(6)-dimethylallyladenosine(37) in tRNA + (sulfur carrier)-SH + AH2 + 2 S-adenosyl-L-methionine = 2-methylsulfanyl-N(6)-dimethylallyladenosine(37) in tRNA + (sulfur carrier)-H + 5'-deoxyadenosine + L-methionine + A + S-adenosyl-L-homocysteine + 2 H(+). Functionally, catalyzes the methylthiolation of N6-(dimethylallyl)adenosine (i(6)A), leading to the formation of 2-methylthio-N6-(dimethylallyl)adenosine (ms(2)i(6)A) at position 37 in tRNAs that read codons beginning with uridine. In Methylococcus capsulatus (strain ATCC 33009 / NCIMB 11132 / Bath), this protein is tRNA-2-methylthio-N(6)-dimethylallyladenosine synthase.